The chain runs to 414 residues: Serine hydroxymethyltransferase (414 aa).

Residues L117 and 121 to 123 each bind (6S)-5,6,7,8-tetrahydrofolate; that span reads GHL. Residue K226 is modified to N6-(pyridoxal phosphate)lysine. 349 to 351 is a binding site for (6S)-5,6,7,8-tetrahydrofolate; it reads SPF.

It belongs to the SHMT family. Homodimer. It depends on pyridoxal 5'-phosphate as a cofactor.

It is found in the cytoplasm. It catalyses the reaction (6R)-5,10-methylene-5,6,7,8-tetrahydrofolate + glycine + H2O = (6S)-5,6,7,8-tetrahydrofolate + L-serine. It participates in one-carbon metabolism; tetrahydrofolate interconversion. The protein operates within amino-acid biosynthesis; glycine biosynthesis; glycine from L-serine: step 1/1. Catalyzes the reversible interconversion of serine and glycine with tetrahydrofolate (THF) serving as the one-carbon carrier. Also exhibits THF-independent aldolase activity toward beta-hydroxyamino acids, producing glycine and aldehydes, via a retro-aldol mechanism. The protein is Serine hydroxymethyltransferase of Methanospirillum hungatei JF-1 (strain ATCC 27890 / DSM 864 / NBRC 100397 / JF-1).